The sequence spans 213 residues: Sclerostin (213 aa).

A signal peptide spans 1-28; the sequence is MQLSLAPCLACLLVHAAFVAVESQGWQA. An N-linked (GlcNAc...) asparagine glycan is attached at N53. 4 disulfide bridges follow: C80–C134, C94–C148, C105–C165, and C109–C167. The 91-residue stretch at 82–172 folds into the CTCK domain; the sequence is ELHYTRFVTD…ASCKCKRLTR (91 aa). An N-linked (GlcNAc...) asparagine glycan is attached at N175. A disordered region spans residues 178–213; it reads ELKDFGPETARPQKGRKPRPRARGAKANQAELENAY. Residues 190-201 show a composition bias toward basic residues; sequence QKGRKPRPRARG.

The protein belongs to the sclerostin family. In terms of assembly, interacts with LRP4 (via the extracellular domain); the interaction facilitates the inhibition of Wnt signaling. Interacts with LRP5 (via the first two YWTD-EGF repeat domains); the interaction inhibits Wnt-mediated signaling. Interacts with LRP6.

Its subcellular location is the secreted. Negative regulator of bone growth that acts through inhibition of Wnt signaling and bone formation. The protein is Sclerostin of Rattus norvegicus (Rat).